Here is a 575-residue protein sequence, read N- to C-terminus: Stage VI sporulation protein D (575 aa).

Residues 159–502 (EELSEPPAHS…ETKEPQTKES (344 aa)) are disordered. Over residues 200–212 (GLREELETEKAES) the composition is skewed to basic and acidic residues. Acidic residues-rich tracts occupy residues 229-238 (KEEEESEELA) and 249-264 (ETEE…EIEI). 3 stretches are compositionally biased toward basic and acidic residues: residues 266–275 (EIVKAKKETA), 283–302 (DVRE…HVGA), and 310–325 (AELH…KEET). Residues 438-448 (EEEEQEEESFE) show a composition bias toward acidic residues. Positions 449 to 464 (IEVRKTPSAEEPKEET) are enriched in basic and acidic residues. Polar residues predominate over residues 465-474 (PFQSFQLPES). The span at 493 to 502 (ETKEPQTKES) shows a compositional bias: basic and acidic residues. The region spanning 523–567 (KICIVQQEDTIERLCERYEITSQQLIRMNSLALDDELKAGQILYI) is the LysM domain.

Its function is as follows. Required for assembly of a normal spore coat. May be a component of the innermost layer of the spore coat that aids in its adherence to the prespore. This chain is Stage VI sporulation protein D (spoVID), found in Bacillus subtilis (strain 168).